We begin with the raw amino-acid sequence, 142 residues long: UPF0102 protein Bcen2424_0290 (142 aa).

Residues 1–19 are compositionally biased toward low complexity; that stretch reads MCHAAPARPEGARGRPPSG. The segment at 1–27 is disordered; the sequence is MCHAAPARPEGARGRPPSGDNFSGAAR.

This sequence belongs to the UPF0102 family.

This is UPF0102 protein Bcen2424_0290 from Burkholderia cenocepacia (strain HI2424).